A 620-amino-acid polypeptide reads, in one-letter code: 1-deoxy-D-xylulose-5-phosphate synthase (620 aa).

Thiamine diphosphate is bound by residues His-80 and 121–123 (GHS). Residue Asp-152 coordinates Mg(2+). Thiamine diphosphate contacts are provided by residues 153-154 (GA), Asn-181, Tyr-288, and Glu-370. Asn-181 contributes to the Mg(2+) binding site.

Belongs to the transketolase family. DXPS subfamily. In terms of assembly, homodimer. The cofactor is Mg(2+). It depends on thiamine diphosphate as a cofactor.

It catalyses the reaction D-glyceraldehyde 3-phosphate + pyruvate + H(+) = 1-deoxy-D-xylulose 5-phosphate + CO2. The protein operates within metabolic intermediate biosynthesis; 1-deoxy-D-xylulose 5-phosphate biosynthesis; 1-deoxy-D-xylulose 5-phosphate from D-glyceraldehyde 3-phosphate and pyruvate: step 1/1. Functionally, catalyzes the acyloin condensation reaction between C atoms 2 and 3 of pyruvate and glyceraldehyde 3-phosphate to yield 1-deoxy-D-xylulose-5-phosphate (DXP). The sequence is that of 1-deoxy-D-xylulose-5-phosphate synthase from Enterobacter sp. (strain 638).